A 228-amino-acid polypeptide reads, in one-letter code: 2,3-bisphosphoglycerate-dependent phosphoglycerate mutase (228 aa).

Residues R8–N15, T21–G22, R60, E87–Y90, K98, R114–R115, and G183–N184 each bind substrate. H9 acts as the Tele-phosphohistidine intermediate in catalysis. Residue E87 is the Proton donor/acceptor of the active site.

The protein belongs to the phosphoglycerate mutase family. BPG-dependent PGAM subfamily.

It catalyses the reaction (2R)-2-phosphoglycerate = (2R)-3-phosphoglycerate. Its pathway is carbohydrate degradation; glycolysis; pyruvate from D-glyceraldehyde 3-phosphate: step 3/5. Its function is as follows. Catalyzes the interconversion of 2-phosphoglycerate and 3-phosphoglycerate. The protein is 2,3-bisphosphoglycerate-dependent phosphoglycerate mutase of Staphylococcus epidermidis (strain ATCC 12228 / FDA PCI 1200).